A 292-amino-acid chain; its full sequence is NAD kinase (292 aa).

The Proton acceptor role is filled by aspartate 73. Residues 73-74, 147-148, histidine 158, arginine 175, aspartate 177, 188-193, and glutamine 247 each bind NAD(+); these read DG, NE, and TAYSLS.

It belongs to the NAD kinase family. It depends on a divalent metal cation as a cofactor.

It is found in the cytoplasm. The catalysed reaction is NAD(+) + ATP = ADP + NADP(+) + H(+). In terms of biological role, involved in the regulation of the intracellular balance of NAD and NADP, and is a key enzyme in the biosynthesis of NADP. Catalyzes specifically the phosphorylation on 2'-hydroxyl of the adenosine moiety of NAD to yield NADP. This is NAD kinase from Serratia proteamaculans (strain 568).